Consider the following 229-residue polypeptide: Coiled-coil domain-containing protein 134 (229 aa).

Residues 1–22 (MDLLQFLAAFSVLLWPGTEVTG) form the signal peptide. Residue Asn-148 is glycosylated (N-linked (GlcNAc...) asparagine). Residues 182-229 (FKTDQTEFIPSTDPFQKALREEEKRRKKEERRKEIRKGPRISRSQSEL) form a disordered region. The stretch at 196–218 (FQKALREEEKRRKKEERRKEIRK) forms a coiled coil. The Prevents secretion from ER signature appears at 226-229 (QSEL).

It belongs to the CCDC134 family. As to quaternary structure, interacts with TADA2A. Associates with the PCAF complex via TADA2A binding. In terms of processing, O-glycosylated, with additional sialic acid modifications.

The protein resides in the endoplasmic reticulum lumen. The protein localises to the secreted. Its subcellular location is the cytoplasm. It is found in the nucleus. Molecular adapter required to prevent protein hyperglycosylation of HSP90B1: during translation, associates with nascent HSP90B1 and the STT3A catalytic component of the OST-A complex and tethers them to a specialized translocon that forms a microenvironment for HSP90B1 folding. In the CCDC134-containing translocon, STT3A associates with the SRT pseudosubstrate motif of HSP90B1, preventing access to facultative glycosylation sites until folding is completed, preventing hyperglycosylation and subsequent degradation of HSP90B1. In extracellular secreted form, promotes proliferation and activation of CD8(+) T-cells, suggesting a cytokine-like function. May inhibit ERK and JNK signaling activity. May suppress cell migration and invasion activity, via its effects on ERK and JNK signaling. May also localize in the nucleus: enhances stability of the PCAF histone acetyltransferase (HAT) complex member TADA2A and thus promotes PCAF-mediated histone acetyltransferase activity. Has a critical role in the regulation of osteogenesis and bone development. The sequence is that of Coiled-coil domain-containing protein 134 (Ccdc134) from Mus musculus (Mouse).